A 20-amino-acid polypeptide reads, in one-letter code: Cruzioseptin-15 (20 aa).

As to expression, expressed by the skin glands.

It is found in the secreted. Functionally, has antimicrobial activity. The chain is Cruzioseptin-15 from Cruziohyla calcarifer (Splendid leaf frog).